The chain runs to 98 residues: Phosphoribosyl-ATP pyrophosphatase (98 aa).

It belongs to the PRA-PH family.

It localises to the cytoplasm. It catalyses the reaction 1-(5-phospho-beta-D-ribosyl)-ATP + H2O = 1-(5-phospho-beta-D-ribosyl)-5'-AMP + diphosphate + H(+). The protein operates within amino-acid biosynthesis; L-histidine biosynthesis; L-histidine from 5-phospho-alpha-D-ribose 1-diphosphate: step 2/9. This is Phosphoribosyl-ATP pyrophosphatase from Haloarcula marismortui (strain ATCC 43049 / DSM 3752 / JCM 8966 / VKM B-1809) (Halobacterium marismortui).